The sequence spans 484 residues: Glutamyl-tRNA(Gln) amidotransferase subunit A (484 aa).

Active-site charge relay system residues include Lys78 and Ser153. Ser177 functions as the Acyl-ester intermediate in the catalytic mechanism.

Belongs to the amidase family. GatA subfamily. In terms of assembly, heterotrimer of A, B and C subunits.

It carries out the reaction L-glutamyl-tRNA(Gln) + L-glutamine + ATP + H2O = L-glutaminyl-tRNA(Gln) + L-glutamate + ADP + phosphate + H(+). Functionally, allows the formation of correctly charged Gln-tRNA(Gln) through the transamidation of misacylated Glu-tRNA(Gln) in organisms which lack glutaminyl-tRNA synthetase. The reaction takes place in the presence of glutamine and ATP through an activated gamma-phospho-Glu-tRNA(Gln). The protein is Glutamyl-tRNA(Gln) amidotransferase subunit A of Thermodesulfovibrio yellowstonii (strain ATCC 51303 / DSM 11347 / YP87).